Consider the following 310-residue polypeptide: MPAFETVVIAYRAEEAHSRIAADRCESLLHKVGCRVLKGPTGPQDNPYPHFLEATGGHIDLAIVLGGDGSILAAARYLAAVDVPILAVNVGGHLGFLTQPPEVLGGRYWERLLAGEWELEKRMMLQASLTGPPPLPERQPYFCLNEFCLKPASEMRLTSIILELAIDGEIIDQIHGDGLLVSTPTGSTSYTVAANGPIIAPSLQAITITPICPLSLSSRPVVLPATGTIEVSPLRDPDLNIKLWSDGAFAAPVHPCQTVRIEVARHPTRLLILEEDHSYFRTLREKLKWAGTRIQAERDPECLLPPQNHP.

Aspartate 68 acts as the Proton acceptor in catalysis. Residues 68 to 69, 145 to 146, arginine 156, histidine 175, and aspartate 177 contribute to the NAD(+) site; these read DG and NE.

This sequence belongs to the NAD kinase family. It depends on a divalent metal cation as a cofactor.

The protein localises to the cytoplasm. The enzyme catalyses NAD(+) + ATP = ADP + NADP(+) + H(+). In terms of biological role, involved in the regulation of the intracellular balance of NAD and NADP, and is a key enzyme in the biosynthesis of NADP. Catalyzes specifically the phosphorylation on 2'-hydroxyl of the adenosine moiety of NAD to yield NADP. In Gloeobacter violaceus (strain ATCC 29082 / PCC 7421), this protein is NAD kinase 1.